The following is a 152-amino-acid chain: Deoxyuridine 5'-triphosphate nucleotidohydrolase (152 aa).

Residues 72 to 74 (RSG), Asn85, and 89 to 91 (TVD) each bind substrate.

This sequence belongs to the dUTPase family. Requires Mg(2+) as cofactor.

The enzyme catalyses dUTP + H2O = dUMP + diphosphate + H(+). Its pathway is pyrimidine metabolism; dUMP biosynthesis; dUMP from dCTP (dUTP route): step 2/2. Functionally, this enzyme is involved in nucleotide metabolism: it produces dUMP, the immediate precursor of thymidine nucleotides and it decreases the intracellular concentration of dUTP so that uracil cannot be incorporated into DNA. The protein is Deoxyuridine 5'-triphosphate nucleotidohydrolase of Nitrobacter hamburgensis (strain DSM 10229 / NCIMB 13809 / X14).